A 108-amino-acid chain; its full sequence is Nucleoid-associated protein BARBAKC583_1239 (108 aa).

Belongs to the YbaB/EbfC family. In terms of assembly, homodimer.

It is found in the cytoplasm. Its subcellular location is the nucleoid. Binds to DNA and alters its conformation. May be involved in regulation of gene expression, nucleoid organization and DNA protection. The sequence is that of Nucleoid-associated protein BARBAKC583_1239 from Bartonella bacilliformis (strain ATCC 35685 / KC583 / Herrer 020/F12,63).